A 101-amino-acid chain; its full sequence is NAD(P)H-quinone oxidoreductase subunit 4L, chloroplastic (101 aa).

3 helical membrane-spanning segments follow: residues 2 to 22 (MLEHVLVLSAYLFSIGIYGLI), 32 to 52 (MCLELILNAVNLNFVTFSDFF), and 61 to 81 (IFSIFVIAIAAAEAAIGPAIV).

This sequence belongs to the complex I subunit 4L family. In terms of assembly, NDH is composed of at least 16 different subunits, 5 of which are encoded in the nucleus.

The protein localises to the plastid. It localises to the chloroplast thylakoid membrane. The catalysed reaction is a plastoquinone + NADH + (n+1) H(+)(in) = a plastoquinol + NAD(+) + n H(+)(out). The enzyme catalyses a plastoquinone + NADPH + (n+1) H(+)(in) = a plastoquinol + NADP(+) + n H(+)(out). NDH shuttles electrons from NAD(P)H:plastoquinone, via FMN and iron-sulfur (Fe-S) centers, to quinones in the photosynthetic chain and possibly in a chloroplast respiratory chain. The immediate electron acceptor for the enzyme in this species is believed to be plastoquinone. Couples the redox reaction to proton translocation, and thus conserves the redox energy in a proton gradient. This Manihot esculenta (Cassava) protein is NAD(P)H-quinone oxidoreductase subunit 4L, chloroplastic.